We begin with the raw amino-acid sequence, 154 residues long: MTKETQLQVEAIKNGSVIDHIPANVGIKVLKLFKLHKTNQRVTIGLNLPSSAMGAKDLIKIENVYVSEEQANQLALYAPHATVNQIENYDVAKKLTLELPKKINAIFECPNSNCITHNEPVDSSFTVINKNDDIQLKCKYCEKVFSREIVTERN.

Positions 109, 114, 138, and 141 each coordinate Zn(2+).

It belongs to the PyrI family. Contains catalytic and regulatory chains. It depends on Zn(2+) as a cofactor.

In terms of biological role, involved in allosteric regulation of aspartate carbamoyltransferase. This is Aspartate carbamoyltransferase regulatory chain from Photobacterium profundum (strain SS9).